The primary structure comprises 338 residues: Holliday junction branch migration complex subunit RuvB (338 aa).

A large ATPase domain (RuvB-L) region spans residues 1–181; that stretch reads MTRTITPSIT…FGVISRLEFY (181 aa). ATP is bound by residues leucine 20, arginine 21, glycine 62, lysine 65, threonine 66, threonine 67, 128 to 130, arginine 171, tyrosine 181, and arginine 218; that span reads EDF. Threonine 66 is a binding site for Mg(2+). Residues 182 to 252 form a small ATPAse domain (RuvB-S) region; sequence TDEELAFIIT…VVQDALALLE (71 aa). The interval 255–338 is head domain (RuvB-H); the sequence is EMGFDQMDRM…VPEPPQGKLF (84 aa). DNA contacts are provided by arginine 310 and arginine 315.

Belongs to the RuvB family. In terms of assembly, homohexamer. Forms an RuvA(8)-RuvB(12)-Holliday junction (HJ) complex. HJ DNA is sandwiched between 2 RuvA tetramers; dsDNA enters through RuvA and exits via RuvB. An RuvB hexamer assembles on each DNA strand where it exits the tetramer. Each RuvB hexamer is contacted by two RuvA subunits (via domain III) on 2 adjacent RuvB subunits; this complex drives branch migration. In the full resolvosome a probable DNA-RuvA(4)-RuvB(12)-RuvC(2) complex forms which resolves the HJ.

Its subcellular location is the cytoplasm. It catalyses the reaction ATP + H2O = ADP + phosphate + H(+). In terms of biological role, the RuvA-RuvB-RuvC complex processes Holliday junction (HJ) DNA during genetic recombination and DNA repair, while the RuvA-RuvB complex plays an important role in the rescue of blocked DNA replication forks via replication fork reversal (RFR). RuvA specifically binds to HJ cruciform DNA, conferring on it an open structure. The RuvB hexamer acts as an ATP-dependent pump, pulling dsDNA into and through the RuvAB complex. RuvB forms 2 homohexamers on either side of HJ DNA bound by 1 or 2 RuvA tetramers; 4 subunits per hexamer contact DNA at a time. Coordinated motions by a converter formed by DNA-disengaged RuvB subunits stimulates ATP hydrolysis and nucleotide exchange. Immobilization of the converter enables RuvB to convert the ATP-contained energy into a lever motion, pulling 2 nucleotides of DNA out of the RuvA tetramer per ATP hydrolyzed, thus driving DNA branch migration. The RuvB motors rotate together with the DNA substrate, which together with the progressing nucleotide cycle form the mechanistic basis for DNA recombination by continuous HJ branch migration. Branch migration allows RuvC to scan DNA until it finds its consensus sequence, where it cleaves and resolves cruciform DNA. This is Holliday junction branch migration complex subunit RuvB from Geotalea uraniireducens (strain Rf4) (Geobacter uraniireducens).